A 210-amino-acid chain; its full sequence is Protein HEADING DATE REPRESSOR 1 (210 aa).

The interval Met1–Leu97 is disordered. The stretch at Gln29–Ala49 forms a coiled coil. 2 stretches are compositionally biased toward basic and acidic residues: residues Ala45–Asp54 and Asp62–Leu79. Positions Arg129 to Gln184 form a coiled coil.

As to quaternary structure, interacts with OSK3 and OSK4. Mostly expressed in leaves, seedlings and floral organs, and, to a lower extent, in panicle, roots, nodes, internodes, leaf joint and sheath.

Its subcellular location is the nucleus. In terms of biological role, regulates flowering time via a photoperiod-dependent pathway. Suppressor of flowering that upregulates HD1 and down-regulates EHD1 in long days (LD), thus leading to the down-regulation of HD3A and RFT1. Triggers OSK4-mediated HD1 phosphorylation. The chain is Protein HEADING DATE REPRESSOR 1 from Oryza sativa subsp. japonica (Rice).